The following is an 80-amino-acid chain: Mitotic-spindle organizing protein 1 (80 aa).

The protein belongs to the MOZART1 family. As to quaternary structure, part of the gamma-tubulin complex.

The protein localises to the cytoplasm. Its subcellular location is the cytoskeleton. It localises to the microtubule organizing center. The protein resides in the spindle pole body. Its function is as follows. Required for gamma-tubulin complex recruitment to the microtubule organizing center (MTOC). This is Mitotic-spindle organizing protein 1 from Pyricularia oryzae (strain 70-15 / ATCC MYA-4617 / FGSC 8958) (Rice blast fungus).